A 729-amino-acid chain; its full sequence is MLYKGDTLYLDWLEDGIAELVFDAPGSVNKLDTATVASLGEAIGVLEQQSDLKGLLLRSNKAAFIVGADITEFLSLFLVPEEQLSQWLHFANSVFNRLEDLPVPTIAAVNGYALGGGCECVLATDYRLATPDLRIGLPETKLGIMPGFGGSVRMPRMLGADSALEIIAAGKDVGADQALKIGLVDGVVKAEKLVEGAMAILRQAINGDLDWKAKRQPKLEPLKLSKIEATMSFTIAKGMVAQTAGKHYPAPITAVKTIEAAARFGREEALNLENKSFVPLAHTNEARALVGIFLNDQYVKGKAKKLTKDVETPKQAAVLGAGIMGGGIAYQSAWKGVPVVMKDINDKSLTLGMTEAAKLLNKQLERGKIDGLKLAGVISTIHPTLDYAGFDRVDIVVEAVVENPKVKKAVLAETEQKVRPDTVLASNTSTIPISELANALERPENFCGMHFFNPVHRMPLVEIIRGEKSSDETIAKVVAWASKMGKTPIVVNDCPGFFVNRVLFPYFAGFSQLLRDGADFRKIDKVMEKQFGWPMGPAYLLDVVGIDTAHHAQAVMAAGFPQRMQKDYRDAIDALFDANRFGQKNGLGFWRYKEDSKGKPKKEEDAVVDDLLAEVSQPKRDFSEEEIIARMMIPMVNEVVRCLEEGIIATPAEADMALVYGLGFPPFHGGAFRWLDTLGSAKYLDMAQQYQHLGPLYEVPEGLRNKARHNEPYYPPVEPARPVGDLKTA.

The segment at 1 to 189 (MLYKGDTLYL…KIGLVDGVVK (189 aa)) is enoyl-CoA hydratase/isomerase. Residue Asp296 participates in substrate binding. The tract at residues 311-729 (ETPKQAAVLG…ARPVGDLKTA (419 aa)) is 3-hydroxyacyl-CoA dehydrogenase. NAD(+)-binding positions include Met324, Asp343, 400–402 (VVE), Lys407, and Ser429. His450 acts as the For 3-hydroxyacyl-CoA dehydrogenase activity in catalysis. NAD(+) is bound at residue Asn453. Positions 500 and 660 each coordinate substrate. The interval 708 to 729 (RHNEPYYPPVEPARPVGDLKTA) is disordered.

In the N-terminal section; belongs to the enoyl-CoA hydratase/isomerase family. The protein in the C-terminal section; belongs to the 3-hydroxyacyl-CoA dehydrogenase family. Heterotetramer of two alpha chains (FadB) and two beta chains (FadA).

The enzyme catalyses a (3S)-3-hydroxyacyl-CoA + NAD(+) = a 3-oxoacyl-CoA + NADH + H(+). The catalysed reaction is a (3S)-3-hydroxyacyl-CoA = a (2E)-enoyl-CoA + H2O. It carries out the reaction a 4-saturated-(3S)-3-hydroxyacyl-CoA = a (3E)-enoyl-CoA + H2O. It catalyses the reaction (3S)-3-hydroxybutanoyl-CoA = (3R)-3-hydroxybutanoyl-CoA. The enzyme catalyses a (3Z)-enoyl-CoA = a 4-saturated (2E)-enoyl-CoA. The catalysed reaction is a (3E)-enoyl-CoA = a 4-saturated (2E)-enoyl-CoA. It participates in lipid metabolism; fatty acid beta-oxidation. Involved in the aerobic and anaerobic degradation of long-chain fatty acids via beta-oxidation cycle. Catalyzes the formation of 3-oxoacyl-CoA from enoyl-CoA via L-3-hydroxyacyl-CoA. It can also use D-3-hydroxyacyl-CoA and cis-3-enoyl-CoA as substrate. The chain is Fatty acid oxidation complex subunit alpha from Escherichia coli O7:K1 (strain IAI39 / ExPEC).